The sequence spans 164 residues: Lipoprotein signal peptidase (164 aa).

4 helical membrane passes run 11–31 (YWVL…AVLS), 41–61 (VIPS…FSFL), 64–84 (QGGW…AYLV), and 92–112 (FAAL…GNVI). Catalysis depends on residues aspartate 122 and aspartate 140. Residues 132–152 (FYPAFNIADSFICVGAVLAVL) form a helical membrane-spanning segment.

This sequence belongs to the peptidase A8 family.

The protein resides in the cell inner membrane. It carries out the reaction Release of signal peptides from bacterial membrane prolipoproteins. Hydrolyzes -Xaa-Yaa-Zaa-|-(S,diacylglyceryl)Cys-, in which Xaa is hydrophobic (preferably Leu), and Yaa (Ala or Ser) and Zaa (Gly or Ala) have small, neutral side chains.. It functions in the pathway protein modification; lipoprotein biosynthesis (signal peptide cleavage). Functionally, this protein specifically catalyzes the removal of signal peptides from prolipoproteins. In Neisseria gonorrhoeae (strain ATCC 700825 / FA 1090), this protein is Lipoprotein signal peptidase.